The following is a 416-amino-acid chain: Neurotensin receptor type 2 (416 aa).

Residues Met1–Lys32 lie on the Extracellular side of the membrane. Residues Val33–His55 form a helical membrane-spanning segment. Topologically, residues Val56 to Arg64 are cytoplasmic. A helical transmembrane segment spans residues Pro65–Met87. Residues Pro88–Arg109 lie on the Extracellular side of the membrane. A disulfide bridge connects residues Cys108 and Cys194. Residues Gly110–Ala131 traverse the membrane as a helical segment. Residues Glu132 to Arg154 lie on the Cytoplasmic side of the membrane. A helical transmembrane segment spans residues Leu155–Gln176. Over Lys177–Ala216 the chain is Extracellular. The helical transmembrane segment at Leu217–Tyr237 threads the bilayer. Residues Ser238–Gln297 lie on the Cytoplasmic side of the membrane. The helical transmembrane segment at Val298–Leu318 threads the bilayer. Over Met319 to His337 the chain is Extracellular. Residues Tyr338–Tyr358 form a helical membrane-spanning segment. Residues Asn359 to Val416 are Cytoplasmic-facing. Cys377 carries S-palmitoyl cysteine lipidation. Ser410 is modified (phosphoserine).

This sequence belongs to the G-protein coupled receptor 1 family. Neurotensin receptor subfamily. NTSR2 sub-subfamily. As to expression, abundant in cortex and hypothalamus, and lower levels seen in the heart and intestine.

It is found in the cell membrane. Receptor for the tridecapeptide neurotensin. It is associated with G proteins that activate a phosphatidylinositol-calcium second messenger system. The polypeptide is Neurotensin receptor type 2 (Ntsr2) (Rattus norvegicus (Rat)).